Reading from the N-terminus, the 254-residue chain is Methyltransferase-like protein 23 (254 aa).

Residues 1-27 (MKSFIFRQNPRKQQQEQNNLVDYSDSD) form a disordered region. The segment covering 11–21 (RKQQQEQNNLV) has biased composition (polar residues).

Belongs to the methyltransferase superfamily. METTL23 family.

In terms of biological role, probable methyltransferase. The sequence is that of Methyltransferase-like protein 23 from Dictyostelium discoideum (Social amoeba).